Here is a 210-residue protein sequence, read N- to C-terminus: Somatotropin-2 (210 aa).

The N-terminal stretch at 1–22 (MGQVFLLMPVLLVSCFLGQGAA) is a signal peptide. Histidine 38 is a binding site for Zn(2+). An intrachain disulfide couples cysteine 71 to cysteine 183. Residue glutamate 192 participates in Zn(2+) binding. Cysteine 200 and cysteine 208 are oxidised to a cystine.

The protein belongs to the somatotropin/prolactin family.

The protein resides in the secreted. Its function is as follows. Growth hormone plays an important role in growth control and is involved in the regulation of several anabolic processes. Implicated as an osmoregulatory substance important for seawater adaptation. This Oncorhynchus mykiss (Rainbow trout) protein is Somatotropin-2 (gh2).